A 127-amino-acid chain; its full sequence is Small ribosomal subunit protein uS11 (127 aa).

It belongs to the universal ribosomal protein uS11 family. In terms of assembly, part of the 30S ribosomal subunit. Interacts with proteins S7 and S18. Binds to IF-3.

Functionally, located on the platform of the 30S subunit, it bridges several disparate RNA helices of the 16S rRNA. Forms part of the Shine-Dalgarno cleft in the 70S ribosome. In Rickettsia canadensis (strain McKiel), this protein is Small ribosomal subunit protein uS11.